Consider the following 953-residue polypeptide: Translation initiation factor IF-2 (953 aa).

2 disordered regions span residues 51-242 (SKAS…QEAK) and 279-363 (TKLK…TERK). Basic and acidic residues-rich tracts occupy residues 80–89 (TGSEHVEKTQ) and 98–111 (FKAE…EQAA). Residues 131–140 (QPNNHQTNEQ) show a composition bias toward polar residues. A compositionally biased stretch (basic and acidic residues) spans 149–188 (SQGDTNDKRIERKASNVSPRHDNHQLVGDRNRSFAKENHK). A compositionally biased stretch (polar residues) spans 191 to 207 (RFTNQKKQGRQEPQSKS). Over residues 229–242 (RQSETRFRAQQEAK) the composition is skewed to basic and acidic residues. The segment covering 282 to 291 (KSSNISAKST) has biased composition (polar residues). Over residues 300–317 (ARPEKNRELTHHSQEGQK) the composition is skewed to basic and acidic residues. Positions 322–338 (SWNSQNQVRNQKNSNWN) are enriched in low complexity. The segment covering 339–348 (KNKKTKKGKN) has biased composition (basic residues). A tr-type G domain is found at 454–623 (ERAPVVTIMG…LLVAEVEELK (170 aa)). Positions 463 to 470 (GHVDHGKT) are G1. 463–470 (GHVDHGKT) lines the GTP pocket. The tract at residues 488-492 (GITQH) is G2. The tract at residues 509–512 (DTPG) is G3. GTP is bound by residues 509 to 513 (DTPGH) and 563 to 566 (NKID). The segment at 563 to 566 (NKID) is G4. Residues 599 to 601 (SAK) are G5.

This sequence belongs to the TRAFAC class translation factor GTPase superfamily. Classic translation factor GTPase family. IF-2 subfamily.

It is found in the cytoplasm. Functionally, one of the essential components for the initiation of protein synthesis. Protects formylmethionyl-tRNA from spontaneous hydrolysis and promotes its binding to the 30S ribosomal subunits. Also involved in the hydrolysis of GTP during the formation of the 70S ribosomal complex. This Streptococcus pyogenes serotype M49 (strain NZ131) protein is Translation initiation factor IF-2.